The sequence spans 164 residues: Phosphopantetheine adenylyltransferase (164 aa).

A substrate-binding site is contributed by Ser-9. ATP contacts are provided by residues 9–10 and His-17; that span reads SF. Residues Lys-41, Val-78, and Arg-92 each contribute to the substrate site. Residues 93-95, Glu-103, and 128-134 each bind ATP; these read GLR and SRPITAT.

Belongs to the bacterial CoaD family. In terms of assembly, homohexamer. It depends on Mg(2+) as a cofactor.

It localises to the cytoplasm. It carries out the reaction (R)-4'-phosphopantetheine + ATP + H(+) = 3'-dephospho-CoA + diphosphate. It functions in the pathway cofactor biosynthesis; coenzyme A biosynthesis; CoA from (R)-pantothenate: step 4/5. Its function is as follows. Reversibly transfers an adenylyl group from ATP to 4'-phosphopantetheine, yielding dephospho-CoA (dPCoA) and pyrophosphate. The sequence is that of Phosphopantetheine adenylyltransferase from Rhizobium etli (strain ATCC 51251 / DSM 11541 / JCM 21823 / NBRC 15573 / CFN 42).